Reading from the N-terminus, the 249-residue chain is BPI fold-containing family A member 2 (249 aa).

Residues 1-18 (MLQLWKLVLLCGVLTGTS) form the signal peptide. N-linked (GlcNAc...) asparagine glycosylation is found at Asn124 and Asn132. A disulfide bridge connects residues Cys174 and Cys217.

It belongs to the BPI/LBP/Plunc superfamily. Plunc family. Detected in submandibular gland. Secreted into saliva.

Its subcellular location is the secreted. Its function is as follows. Has strong antibacterial activity against P.aeruginosa. The protein is BPI fold-containing family A member 2 (BPIFA2) of Homo sapiens (Human).